Consider the following 251-residue polypeptide: Malonyl-[acyl-carrier protein] O-methyltransferase (251 aa).

Belongs to the methyltransferase superfamily.

It carries out the reaction malonyl-[ACP] + S-adenosyl-L-methionine = malonyl-[ACP] methyl ester + S-adenosyl-L-homocysteine. It functions in the pathway cofactor biosynthesis; biotin biosynthesis. In terms of biological role, converts the free carboxyl group of a malonyl-thioester to its methyl ester by transfer of a methyl group from S-adenosyl-L-methionine (SAM). It allows to synthesize pimeloyl-ACP via the fatty acid synthetic pathway. The chain is Malonyl-[acyl-carrier protein] O-methyltransferase from Enterobacter lignolyticus (strain SCF1).